The following is a 114-amino-acid chain: Transmembrane protein 14B (114 aa).

The next 4 membrane-spanning stretches (helical) occupy residues 8 to 28, 34 to 54, 60 to 80, and 83 to 103; these read LVPL…GGIV, GSVP…LGAY, PRNV…VMGM, and YYYG…LMAA.

Belongs to the TMEM14 family. As to quaternary structure, interacts with IQGAP1; this interaction promotes phosphorylation and nuclear translocation of IQGAP1. As to expression, mainly expressed in the outer subventricular zone (OSVZ) of the fetal brains.

It localises to the membrane. Functionally, primate-specific protein involved in cortical expansion and folding in the developing neocortex. May drive neural progenitor proliferation through nuclear translocation of IQGAP1, which in turn promotes G1/S cell cycle transitions. In Homo sapiens (Human), this protein is Transmembrane protein 14B (TMEM14B).